Here is a 388-residue protein sequence, read N- to C-terminus: Xylose isomerase (388 aa).

Residues His54 and Asp57 contribute to the active site. Residues Glu181, Glu217, His220, Asp245, Asp255, Asp257, and Asp287 each contribute to the Mg(2+) site.

Belongs to the xylose isomerase family. In terms of assembly, homotetramer. Mg(2+) is required as a cofactor.

The protein localises to the cytoplasm. It carries out the reaction alpha-D-xylose = alpha-D-xylulofuranose. Its function is as follows. Involved in D-xylose catabolism. The sequence is that of Xylose isomerase (xylA) from Streptomyces rubiginosus.